We begin with the raw amino-acid sequence, 439 residues long: GTPase Der (439 aa).

EngA-type G domains lie at 3-167 (PTVA…DKVG) and 176-351 (IKVA…GNYT). GTP is bound by residues 9–16 (GRPNVGKS), 56–60 (DTGGI), 119–122 (NKID), 182–189 (GKPNTGKS), 229–233 (DTAGL), and 294–297 (NKWD). The KH-like domain occupies 352 to 436 (RRITTGQIND…PIVFLIREKG (85 aa)).

The protein belongs to the TRAFAC class TrmE-Era-EngA-EngB-Septin-like GTPase superfamily. EngA (Der) GTPase family. Associates with the 50S ribosomal subunit.

Functionally, GTPase that plays an essential role in the late steps of ribosome biogenesis. The protein is GTPase Der of Caldicellulosiruptor saccharolyticus (strain ATCC 43494 / DSM 8903 / Tp8T 6331).